The chain runs to 261 residues: Succinate dehydrogenase [ubiquinone] iron-sulfur subunit, mitochondrial (261 aa).

Residues 31-122 form the 2Fe-2S ferredoxin-type domain; that stretch reads FKIYRWNPDT…DVKIYPLPHM (92 aa). Residues C82, C87, C90, and C102 each coordinate [2Fe-2S] cluster. Residues 164 to 194 enclose the 4Fe-4S ferredoxin-type domain; the sequence is DRKKLDGLYECILCACCSTACPSYWWNNEQY. The [4Fe-4S] cluster site is built by C174, C177, and C180. Residue C184 participates in [3Fe-4S] cluster binding. An a ubiquinone-binding site is contributed by W189. Positions 231 and 237 each coordinate [3Fe-4S] cluster. C241 is a binding site for [4Fe-4S] cluster.

This sequence belongs to the succinate dehydrogenase/fumarate reductase iron-sulfur protein family. As to quaternary structure, component of complex II composed of four subunits: a flavoprotein (FP), an iron-sulfur protein (IP), and a cytochrome b composed of a large and a small subunit. [2Fe-2S] cluster serves as cofactor. The cofactor is [3Fe-4S] cluster. Requires [4Fe-4S] cluster as cofactor.

It localises to the mitochondrion inner membrane. It carries out the reaction a quinone + succinate = fumarate + a quinol. The protein operates within carbohydrate metabolism; tricarboxylic acid cycle; fumarate from succinate (eukaryal route): step 1/1. Iron-sulfur protein (IP) subunit of succinate dehydrogenase (SDH) that is involved in complex II of the mitochondrial electron transport chain and is responsible for transferring electrons from succinate to ubiquinone (coenzyme Q). The polypeptide is Succinate dehydrogenase [ubiquinone] iron-sulfur subunit, mitochondrial (SDH2) (Eremothecium gossypii (strain ATCC 10895 / CBS 109.51 / FGSC 9923 / NRRL Y-1056) (Yeast)).